A 465-amino-acid chain; its full sequence is Cysteine--tRNA ligase (465 aa).

Cysteine 27 serves as a coordination point for Zn(2+). Positions 29-39 (PTVYNFFHIGN) match the 'HIGH' region motif. Cysteine 207, histidine 232, and glutamate 236 together coordinate Zn(2+). Residues 264 to 268 (KMSKS) carry the 'KMSKS' region motif. Lysine 267 serves as a coordination point for ATP.

Belongs to the class-I aminoacyl-tRNA synthetase family. In terms of assembly, monomer. The cofactor is Zn(2+).

The protein localises to the cytoplasm. It catalyses the reaction tRNA(Cys) + L-cysteine + ATP = L-cysteinyl-tRNA(Cys) + AMP + diphosphate. The polypeptide is Cysteine--tRNA ligase (Clostridium kluyveri (strain NBRC 12016)).